The following is a 307-amino-acid chain: MRIVFAGTPDFAVASLRAAAQRHEVVAVYTQPDRPAGRGRGLTPSPVKLDAIARGIPVFQPQTLRSPEALATLRALQPDLMVVVAYGLILPKAVLAAPTHGCWNVHASLLPRWRGAAPIQRAIEAGDTETGVCLMQMEAGLDTGPVLLSQRVEIGEQETGGQLHDRLAALGAQVLSDGLGLLRAGIRPVAQPQPAEGVTYAHKLDKAQARLDWAQPAEELARRVRAFNPWPVAEAILAGERVRLHGAVALDLAHQQAPGTLLAASKQGIDIACGQGALRVRVLQREGGKAITAADYLNARRDLPALR.

Residue 108–111 (SLLP) coordinates (6S)-5,6,7,8-tetrahydrofolate.

This sequence belongs to the Fmt family.

It catalyses the reaction L-methionyl-tRNA(fMet) + (6R)-10-formyltetrahydrofolate = N-formyl-L-methionyl-tRNA(fMet) + (6S)-5,6,7,8-tetrahydrofolate + H(+). Functionally, attaches a formyl group to the free amino group of methionyl-tRNA(fMet). The formyl group appears to play a dual role in the initiator identity of N-formylmethionyl-tRNA by promoting its recognition by IF2 and preventing the misappropriation of this tRNA by the elongation apparatus. The protein is Methionyl-tRNA formyltransferase of Xanthomonas campestris pv. campestris (strain 8004).